The following is a 67-amino-acid chain: Small ribosomal subunit protein bS21 (67 aa).

It belongs to the bacterial ribosomal protein bS21 family.

The chain is Small ribosomal subunit protein bS21 from Desulfovibrio desulfuricans (strain ATCC 27774 / DSM 6949 / MB).